The primary structure comprises 134 residues: L-ectoine synthase (134 aa).

This sequence belongs to the ectoine synthase family.

The catalysed reaction is (2S)-4-acetamido-2-aminobutanoate = L-ectoine + H2O. It participates in amine and polyamine biosynthesis; ectoine biosynthesis; L-ectoine from L-aspartate 4-semialdehyde: step 3/3. In terms of biological role, catalyzes the circularization of gamma-N-acetyl-alpha,gamma-diaminobutyric acid (ADABA) to ectoine (1,4,5,6-tetrahydro-2-methyl-4-pyrimidine carboxylic acid), which is an excellent osmoprotectant. The chain is L-ectoine synthase from Shouchella clausii (strain KSM-K16) (Alkalihalobacillus clausii).